The following is a 38-amino-acid chain: Large ribosomal subunit protein bL36 (38 aa).

Belongs to the bacterial ribosomal protein bL36 family.

In Synechococcus sp. (strain JA-2-3B'a(2-13)) (Cyanobacteria bacterium Yellowstone B-Prime), this protein is Large ribosomal subunit protein bL36.